Reading from the N-terminus, the 220-residue chain is Vesicle-associated membrane protein 7 (220 aa).

The Cytoplasmic portion of the chain corresponds to Ala-2 to Lys-188. A Longin domain is found at Val-7–Leu-110. The v-SNARE coiled-coil homology domain occupies Gln-125 to Lys-185. A helical; Anchor for type IV membrane protein transmembrane segment spans residues Leu-189 to Cys-209. Residues Gly-210 to Lys-220 lie on the Vesicular side of the membrane.

Belongs to the synaptobrevin family.

It is found in the cytoplasmic vesicle. The protein localises to the secretory vesicle membrane. It localises to the golgi apparatus. The protein resides in the trans-Golgi network membrane. Its subcellular location is the late endosome membrane. It is found in the lysosome membrane. The protein localises to the endoplasmic reticulum membrane. It localises to the phagosome membrane. The protein resides in the synapse. Its subcellular location is the synaptosome. Its function is as follows. Involved in the targeting and/or fusion of transport vesicles to their target membrane during transport of proteins from the early endosome to the lysosome. Required for heterotypic fusion of late endosomes with lysosomes and homotypic lysosomal fusion. Required for calcium regulated lysosomal exocytosis. Involved in the export of chylomicrons from the endoplasmic reticulum to the cis Golgi. Required for focal exocytosis of late endocytic vesicles during phagosome formation. In Gallus gallus (Chicken), this protein is Vesicle-associated membrane protein 7.